Consider the following 217-residue polypeptide: Transmembrane emp24 domain-containing protein p24delta6 (217 aa).

A signal peptide spans 1 to 26 (MAISPVLFIGLIYLAGGGSLFPGVEA). The Lumenal portion of the chain corresponds to 27–186 (IWLTVPESGE…INEKTNTRVN (160 aa)). Residues 36–152 (ERCVYEEIQA…IEGVELEIRR (117 aa)) form the GOLD domain. N-linked (GlcNAc...) asparagine glycans are attached at residues asparagine 84 and asparagine 116. Residues 138 to 160 (AKKEKIEGVELEIRRSTEYASAI) are a coiled coil. An omega-N-methylated arginine mark is found at arginine 170 and arginine 175. Residues 187-207 (QLGLMSLGVAIVVSISQVLYL) form a helical membrane-spanning segment. The Cytoplasmic segment spans residues 208-217 (KRYFLKKKLI). A COPII vesicle coat-binding motif is present at residues 210–211 (YF). A COPI vesicle coat-binding motif is present at residues 210–217 (YFLKKKLI).

The protein belongs to the EMP24/GP25L family. As to quaternary structure, probably oligomerizes with other members of the EMP24/GP25L family. Associates with the COPI vesicle coat (coatomer). Associates with the COPII vesicle coat (coatomer).

It localises to the endoplasmic reticulum membrane. In terms of biological role, involved in vesicular protein trafficking. Mainly functions in the early secretory pathway. Thought to act as cargo receptor at the lumenal side for incorporation of secretory cargo molecules into transport vesicles and to be involved in vesicle coat formation at the cytoplasmic side. This is Transmembrane emp24 domain-containing protein p24delta6 from Arabidopsis thaliana (Mouse-ear cress).